A 353-amino-acid polypeptide reads, in one-letter code: Protein MGF 360-11L (353 aa).

Belongs to the asfivirus MGF 360 family. Interacts with host TBK1 ad IRF7.

Plays a role in virus cell tropism, and may be required for efficient virus replication in macrophages. In addition, inhibits the phosphorylation of host TBK1 and IRF7 and thereby negatively regulates the host cGAS signaling pathway and antagonizes IFN-mediated antiviral activity. This is Protein MGF 360-11L from Ornithodoros (relapsing fever ticks).